The following is a 137-amino-acid chain: Putative transcription elongation factor S-II-like protein 055R (137 aa).

The TFIIS-type zinc-finger motif lies at 85-136 (DFITCPYEVSEGVLRCGKCDCTKILWFSKQTRSMDEPTTIFASCSNCKTRWT). Zn(2+)-binding residues include Cys-89, Cys-103, Cys-128, and Cys-131.

Belongs to the IIV-6 349L family.

The polypeptide is Putative transcription elongation factor S-II-like protein 055R (Aedes vexans (Inland floodwater mosquito)).